The chain runs to 345 residues: uncharacterized protein (345 aa).

2 helical membrane-spanning segments follow: residues 23–43 (VVGF…YSYV) and 56–76 (FLIA…FVAL). The disordered stretch occupies residues 326–345 (VTEPTTNSKRKPVKAKKAKK). Basic residues predominate over residues 333-345 (SKRKPVKAKKAKK).

Its subcellular location is the cell membrane. This is an uncharacterized protein from Mycoplasma pneumoniae (strain ATCC 29342 / M129 / Subtype 1) (Mycoplasmoides pneumoniae).